A 431-amino-acid polypeptide reads, in one-letter code: 4-hydroxy-3-methylbut-2-en-1-yl diphosphate synthase (flavodoxin) (431 aa).

Positions 1–12 (MNKLENPLRDDV) are enriched in basic and acidic residues. The tract at residues 1–20 (MNKLENPLRDDVAGPAPRHQ) is disordered. 4 residues coordinate [4Fe-4S] cluster: C310, C313, C356, and E363.

This sequence belongs to the IspG family. It depends on [4Fe-4S] cluster as a cofactor.

It carries out the reaction (2E)-4-hydroxy-3-methylbut-2-enyl diphosphate + oxidized [flavodoxin] + H2O + 2 H(+) = 2-C-methyl-D-erythritol 2,4-cyclic diphosphate + reduced [flavodoxin]. Its pathway is isoprenoid biosynthesis; isopentenyl diphosphate biosynthesis via DXP pathway; isopentenyl diphosphate from 1-deoxy-D-xylulose 5-phosphate: step 5/6. Converts 2C-methyl-D-erythritol 2,4-cyclodiphosphate (ME-2,4cPP) into 1-hydroxy-2-methyl-2-(E)-butenyl 4-diphosphate. This Rhodopseudomonas palustris (strain TIE-1) protein is 4-hydroxy-3-methylbut-2-en-1-yl diphosphate synthase (flavodoxin).